The sequence spans 353 residues: MSLLTDTITRIGSLDSAAATAAQARQDVLTKPQGALGRLETLSVQIAGITGQTRPRLNNPAVIVMAADHGVARRGVSAYPSEVTSQMVLNFLNGGAAINVLARHIGARVIVVDIGVAANLPSHSELIDRKLGMGTADFSVEPAMSRAQAQQAVEIGIACAYDAIASGVDLLATGDMGIGNTTASSAVVAAITGRPVAEVTGRGAGIDDAGLARKIAVIEQALALHHPDPRDALDVLTKVGGFEIGGLAGVILGAAARRVPVVIDGFISGAAALIACTLAPSAQPFLIAALRSVERGHDAVFAHLDLTPLFDLGMRLGEGTGAVLGMSLCQAACKILDEMATFGEAGVSGKVEG.

E318 (proton acceptor) is an active-site residue.

It belongs to the CobT family.

The catalysed reaction is 5,6-dimethylbenzimidazole + nicotinate beta-D-ribonucleotide = alpha-ribazole 5'-phosphate + nicotinate + H(+). It participates in nucleoside biosynthesis; alpha-ribazole biosynthesis; alpha-ribazole from 5,6-dimethylbenzimidazole: step 1/2. Catalyzes the synthesis of alpha-ribazole-5'-phosphate from nicotinate mononucleotide (NAMN) and 5,6-dimethylbenzimidazole (DMB). The sequence is that of Nicotinate-nucleotide--dimethylbenzimidazole phosphoribosyltransferase from Roseiflexus castenholzii (strain DSM 13941 / HLO8).